Here is a 943-residue protein sequence, read N- to C-terminus: Protein translocase subunit SecA (943 aa).

ATP contacts are provided by residues Gln90, 108 to 112 (GEGKT), and Asp509. Residues 534–576 (KPDNEHKPPIPQQRSSKAGGGFASKSESISNKNSKSSGASLFP) form a disordered region. Positions 556–570 (ASKSESISNKNSKSS) are enriched in low complexity.

Belongs to the SecA family. As to quaternary structure, monomer and homodimer. Part of the essential Sec protein translocation apparatus which comprises SecA, SecYEG and auxiliary proteins SecDF. Other proteins may also be involved.

The protein localises to the cell inner membrane. Its subcellular location is the cellular thylakoid membrane. It localises to the cytoplasm. The catalysed reaction is ATP + H2O + cellular proteinSide 1 = ADP + phosphate + cellular proteinSide 2.. Functionally, part of the Sec protein translocase complex. Interacts with the SecYEG preprotein conducting channel. Has a central role in coupling the hydrolysis of ATP to the transfer of proteins into and across the cell membrane, serving as an ATP-driven molecular motor driving the stepwise translocation of polypeptide chains across the membrane. In terms of biological role, probably participates in protein translocation into and across both the cytoplasmic and thylakoid membranes in cyanobacterial cells. The protein is Protein translocase subunit SecA of Prochlorococcus marinus (strain MIT 9515).